The primary structure comprises 339 residues: Adenylosuccinate synthetase (339 aa).

Residues 12–18 and 42–44 each bind GTP; these read GDEGKGS and GHS. Asp-13 (proton acceptor) is an active-site residue. Mg(2+) is bound by residues Asp-13 and Gly-42. IMP-binding positions include 13–16, 40–43, Thr-127, Arg-141, Gln-179, Thr-194, and Arg-256; these read DEGK and NAGH. The Proton donor role is filled by His-43. A substrate-binding site is contributed by 252–258; it reads TVTGRRR. GTP-binding positions include Arg-258, 284-286, and 324-326; these read MLD and KTG.

Belongs to the adenylosuccinate synthetase family. Homodimer. Requires Mg(2+) as cofactor.

It localises to the cytoplasm. The catalysed reaction is IMP + L-aspartate + GTP = N(6)-(1,2-dicarboxyethyl)-AMP + GDP + phosphate + 2 H(+). Its pathway is purine metabolism; AMP biosynthesis via de novo pathway; AMP from IMP: step 1/2. In terms of biological role, plays an important role in the de novo pathway of purine nucleotide biosynthesis. Catalyzes the first committed step in the biosynthesis of AMP from IMP. The sequence is that of Adenylosuccinate synthetase from Pyrococcus sp. (strain ST700).